The chain runs to 191 residues: Ribosome maturation factor RimM (191 aa).

The 78-residue stretch at 114–191 folds into the PRC barrel domain; it reads EDEYYWVDLI…RIVVDWQPDY (78 aa).

The protein belongs to the RimM family. Binds ribosomal protein uS19.

It localises to the cytoplasm. An accessory protein needed during the final step in the assembly of 30S ribosomal subunit, possibly for assembly of the head region. Essential for efficient processing of 16S rRNA. May be needed both before and after RbfA during the maturation of 16S rRNA. It has affinity for free ribosomal 30S subunits but not for 70S ribosomes. This chain is Ribosome maturation factor RimM, found in Paracidovorax citrulli (strain AAC00-1) (Acidovorax citrulli).